A 433-amino-acid polypeptide reads, in one-letter code: tRNA-2-methylthio-N(6)-dimethylallyladenosine synthase (433 aa).

Residues 3-118 form the MTTase N-terminal domain; it reads KKLFIQTLGC…ISRVIHQEKA (116 aa). C12, C49, C81, C150, C154, and C157 together coordinate [4Fe-4S] cluster. Positions 136–369 constitute a Radical SAM core domain; the sequence is SRNDYKAMVN…QARHKEILEE (234 aa). Residues 372 to 433 form the TRAM domain; that stretch reads QKEVGAIHSV…YRAFLIGEPL (62 aa).

It belongs to the methylthiotransferase family. MiaB subfamily. Monomer. [4Fe-4S] cluster serves as cofactor.

Its subcellular location is the cytoplasm. The catalysed reaction is N(6)-dimethylallyladenosine(37) in tRNA + (sulfur carrier)-SH + AH2 + 2 S-adenosyl-L-methionine = 2-methylsulfanyl-N(6)-dimethylallyladenosine(37) in tRNA + (sulfur carrier)-H + 5'-deoxyadenosine + L-methionine + A + S-adenosyl-L-homocysteine + 2 H(+). Functionally, catalyzes the methylthiolation of N6-(dimethylallyl)adenosine (i(6)A), leading to the formation of 2-methylthio-N6-(dimethylallyl)adenosine (ms(2)i(6)A) at position 37 in tRNAs that read codons beginning with uridine. This is tRNA-2-methylthio-N(6)-dimethylallyladenosine synthase from Wolinella succinogenes (strain ATCC 29543 / DSM 1740 / CCUG 13145 / JCM 31913 / LMG 7466 / NCTC 11488 / FDC 602W) (Vibrio succinogenes).